The chain runs to 622 residues: uncharacterized protein (622 aa).

The span at 157–166 shows a compositional bias: basic and acidic residues; sequence LKESPLRDQQ. The tract at residues 157-238 is disordered; the sequence is LKESPLRDQQ…GLPDHNSISE (82 aa).

This is an uncharacterized protein from Homo sapiens (Human).